The following is an 826-amino-acid chain: Disintegrin and metalloproteinase domain-containing protein 8 (826 aa).

A signal peptide spans 1–16 (MLGLWLLSVLWTPAVA). The Extracellular segment spans residues 17–658 (PGPPLPHVKQ…VSDEQAASTS (642 aa)). N-linked (GlcNAc...) asparagine glycans are attached at residues asparagine 89 and asparagine 260. The region spanning 196-395 (RYVELYVVAD…PQTGCLTNVP (200 aa)) is the Peptidase M12B domain. 12 disulfides stabilise this stretch: cysteine 305/cysteine 390, cysteine 346/cysteine 374, cysteine 348/cysteine 357, cysteine 430/cysteine 452, cysteine 443/cysteine 449, cysteine 461/cysteine 481, cysteine 468/cysteine 498, cysteine 493/cysteine 503, cysteine 563/cysteine 615, cysteine 615/cysteine 625, cysteine 619/cysteine 631, and cysteine 633/cysteine 642. Histidine 329 provides a ligand contact to Zn(2+). Glutamate 330 is a catalytic residue. Zn(2+) is bound by residues histidine 333 and histidine 339. A Disintegrin domain is found at 403–489 (GPVCGNLFVE…TCPEDAFQQN (87 aa)). Residue asparagine 431 is glycosylated (N-linked (GlcNAc...) asparagine). Residues 611–643 (RSENCSAKCNNHGVCNHKRECHCHKGWAPPNCV) enclose the EGF-like domain. A glycan (N-linked (GlcNAc...) asparagine) is linked at asparagine 614. Residues 659–683 (LPVSVVVVLVILVAAMVIVAGIVIY) form a helical membrane-spanning segment. Residues 684 to 826 (RKAPRQIQRR…VALKVPIQKR (143 aa)) lie on the Cytoplasmic side of the membrane. The disordered stretch occupies residues 701–826 (SGLSNPLFYT…VALKVPIQKR (126 aa)). Residues 733 to 748 (PPRPIVKPKRPPPAPP) show a composition bias toward pro residues. A compositionally biased stretch (low complexity) spans 749–763 (GAVSSSPLPVPVYAP).

Interacts with FST3. Requires Zn(2+) as cofactor. As to expression, macrophages.

Its subcellular location is the membrane. In terms of biological role, possible involvement in extravasation of leukocytes. In Mus musculus (Mouse), this protein is Disintegrin and metalloproteinase domain-containing protein 8 (Adam8).